The primary structure comprises 511 residues: Lysine--tRNA ligase (511 aa).

Residues Glu403 and Glu410 each contribute to the Mg(2+) site.

This sequence belongs to the class-II aminoacyl-tRNA synthetase family. Homodimer. Requires Mg(2+) as cofactor.

Its subcellular location is the cytoplasm. The catalysed reaction is tRNA(Lys) + L-lysine + ATP = L-lysyl-tRNA(Lys) + AMP + diphosphate. In Onion yellows phytoplasma (strain OY-M), this protein is Lysine--tRNA ligase.